The primary structure comprises 496 residues: Aldehyde dehydrogenase (496 aa).

Active-site residues include Glu-263 and Cys-296.

This sequence belongs to the aldehyde dehydrogenase family.

Its subcellular location is the cytoplasm. The enzyme catalyses an aldehyde + NAD(+) + H2O = a carboxylate + NADH + 2 H(+). The sequence is that of Aldehyde dehydrogenase (CLAH10) from Davidiella tassiana (Mycosphaerella tassiana).